A 592-amino-acid polypeptide reads, in one-letter code: Aspartate--tRNA(Asp/Asn) ligase (592 aa).

E171 contributes to the L-aspartate binding site. An aspartate region spans residues 195 to 198 (QLFK). R217 contributes to the L-aspartate binding site. Residues 217-219 (RDE) and Q226 each bind ATP. L-aspartate is bound at residue H447. ATP is bound at residue E481. An L-aspartate-binding site is contributed by R488. Residue 533 to 536 (GLDR) coordinates ATP.

This sequence belongs to the class-II aminoacyl-tRNA synthetase family. Type 1 subfamily. In terms of assembly, homodimer.

The protein resides in the cytoplasm. It catalyses the reaction tRNA(Asx) + L-aspartate + ATP = L-aspartyl-tRNA(Asx) + AMP + diphosphate. Its function is as follows. Aspartyl-tRNA synthetase with relaxed tRNA specificity since it is able to aspartylate not only its cognate tRNA(Asp) but also tRNA(Asn). Reaction proceeds in two steps: L-aspartate is first activated by ATP to form Asp-AMP and then transferred to the acceptor end of tRNA(Asp/Asn). In Psychromonas ingrahamii (strain DSM 17664 / CCUG 51855 / 37), this protein is Aspartate--tRNA(Asp/Asn) ligase.